A 223-amino-acid polypeptide reads, in one-letter code: Guanylate kinase (223 aa).

In terms of domain architecture, Guanylate kinase-like spans 6-183; the sequence is GRLFVMTGAS…AVADFLAILT (178 aa). 13 to 20 contributes to the ATP binding site; sequence GASGVGKG.

It belongs to the guanylate kinase family.

Its subcellular location is the cytoplasm. The enzyme catalyses GMP + ATP = GDP + ADP. Functionally, essential for recycling GMP and indirectly, cGMP. This chain is Guanylate kinase, found in Thermus thermophilus (strain ATCC 27634 / DSM 579 / HB8).